The primary structure comprises 125 residues: Mediator of RNA polymerase II transcription subunit 11 (125 aa).

Belongs to the Mediator complex subunit 11 family. As to quaternary structure, component of the Mediator complex.

Its subcellular location is the nucleus. Functionally, component of the Mediator complex, a coactivator involved in the regulated transcription of nearly all RNA polymerase II-dependent genes. Mediator functions as a bridge to convey information from gene-specific regulatory proteins to the basal RNA polymerase II transcription machinery. Mediator is recruited to promoters by direct interactions with regulatory proteins and serves as a scaffold for the assembly of a functional pre-initiation complex with RNA polymerase II and the general transcription factors. The sequence is that of Mediator of RNA polymerase II transcription subunit 11 (MED11) from Candida glabrata (strain ATCC 2001 / BCRC 20586 / JCM 3761 / NBRC 0622 / NRRL Y-65 / CBS 138) (Yeast).